A 351-amino-acid polypeptide reads, in one-letter code: Photosystem II D2 protein (351 aa).

The chain crosses the membrane as a helical span at residues 39–59; it reads CAYLALGGWLTGTTFVTSWYT. A chlorophyll a-binding site is contributed by His-116. A helical membrane pass occupies residues 123–139; sequence GFMLRQFEIARLVGIRP. Residues Gln-128 and Asn-141 each contribute to the pheophytin a site. A helical transmembrane segment spans residues 151 to 164; it reads VFVSVFLMYPLGQS. A chlorophyll a-binding site is contributed by His-196. The chain crosses the membrane as a helical span at residues 206-226; the sequence is GALLCAIHGATVENTLFEDGE. His-213 and Phe-260 together coordinate a plastoquinone. His-213 provides a ligand contact to Fe cation. Residue His-267 coordinates Fe cation. Residues 277–293 traverse the membrane as a helical segment; sequence GLWMSAIGIVGLALNLR.

Belongs to the reaction center PufL/M/PsbA/D family. In terms of assembly, PSII is composed of 1 copy each of membrane proteins PsbA, PsbB, PsbC, PsbD, PsbE, PsbF, PsbH, PsbI, PsbJ, PsbK, PsbL, PsbM, PsbT, PsbX, PsbY, PsbZ, Psb30/Ycf12, peripheral proteins PsbO, CyanoQ (PsbQ), PsbU, PsbV and a large number of cofactors. It forms dimeric complexes. It depends on The D1/D2 heterodimer binds P680, chlorophylls that are the primary electron donor of PSII, and subsequent electron acceptors. It shares a non-heme iron and each subunit binds pheophytin, quinone, additional chlorophylls, carotenoids and lipids. There is also a Cl(-1) ion associated with D1 and D2, which is required for oxygen evolution. The PSII complex binds additional chlorophylls, carotenoids and specific lipids. as a cofactor.

It is found in the cellular thylakoid membrane. It catalyses the reaction 2 a plastoquinone + 4 hnu + 2 H2O = 2 a plastoquinol + O2. In terms of biological role, photosystem II (PSII) is a light-driven water:plastoquinone oxidoreductase that uses light energy to abstract electrons from H(2)O, generating O(2) and a proton gradient subsequently used for ATP formation. It consists of a core antenna complex that captures photons, and an electron transfer chain that converts photonic excitation into a charge separation. The D1/D2 (PsbA/PsbD) reaction center heterodimer binds P680, the primary electron donor of PSII as well as several subsequent electron acceptors. D2 is needed for assembly of a stable PSII complex. This is Photosystem II D2 protein from Crocosphaera subtropica (strain ATCC 51142 / BH68) (Cyanothece sp. (strain ATCC 51142)).